We begin with the raw amino-acid sequence, 557 residues long: Phosphomethylpyrimidine synthase (557 aa).

Residues Asn197, Met226, Tyr255, His291, 311 to 313 (SRG), 352 to 355 (DGLR), and Glu391 contribute to the substrate site. Residue His395 coordinates Zn(2+). Tyr418 contacts substrate. His459 is a binding site for Zn(2+). [4Fe-4S] cluster contacts are provided by Cys539, Cys542, and Cys547.

The protein belongs to the ThiC family. Homodimer. Requires [4Fe-4S] cluster as cofactor.

The catalysed reaction is 5-amino-1-(5-phospho-beta-D-ribosyl)imidazole + S-adenosyl-L-methionine = 4-amino-2-methyl-5-(phosphooxymethyl)pyrimidine + CO + 5'-deoxyadenosine + formate + L-methionine + 3 H(+). It functions in the pathway cofactor biosynthesis; thiamine diphosphate biosynthesis. Its function is as follows. Catalyzes the synthesis of the hydroxymethylpyrimidine phosphate (HMP-P) moiety of thiamine from aminoimidazole ribotide (AIR) in a radical S-adenosyl-L-methionine (SAM)-dependent reaction. This chain is Phosphomethylpyrimidine synthase, found in Anaplasma phagocytophilum (strain HZ).